Reading from the N-terminus, the 306-residue chain is Prophage bactoprenol glucosyl transferase homolog (306 aa).

The Cytoplasmic portion of the chain corresponds to 1–227 (MKISLVVPVF…ITSFSTFPLR (227 aa)). A helical transmembrane segment spans residues 228-248 (IWTYIGLVVASVAFIYGAWMI). The Periplasmic portion of the chain corresponds to 249 to 262 (LDTIIFGNAVRGYP). Residues 263-283 (SLLVSILFLGGIQMIGIGVLG) form a helical membrane-spanning segment. Residues 284-306 (EYIGRTYIETKKRPKYIIKRVKK) are Cytoplasmic-facing.

Belongs to the glycosyltransferase 2 family. GtrB subfamily.

The protein resides in the cell inner membrane. Its function is as follows. Involved in O antigen modification. Catalyzes the transfer of the glucose residue from UDP-glucose to a lipid carrier. The polypeptide is Prophage bactoprenol glucosyl transferase homolog (yfdH) (Escherichia coli (strain K12)).